Reading from the N-terminus, the 381-residue chain is Glucose-1-phosphate adenylyltransferase (381 aa).

Residues Y100, G165, 180–181 (EK), and S191 each bind alpha-D-glucose 1-phosphate.

Belongs to the bacterial/plant glucose-1-phosphate adenylyltransferase family. Homotetramer.

The catalysed reaction is alpha-D-glucose 1-phosphate + ATP + H(+) = ADP-alpha-D-glucose + diphosphate. Its pathway is glycan biosynthesis; glycogen biosynthesis. Functionally, involved in the biosynthesis of ADP-glucose, a building block required for the elongation reactions to produce glycogen. Catalyzes the reaction between ATP and alpha-D-glucose 1-phosphate (G1P) to produce pyrophosphate and ADP-Glc. The polypeptide is Glucose-1-phosphate adenylyltransferase (Mycoplasma mobile (strain ATCC 43663 / 163K / NCTC 11711) (Mesomycoplasma mobile)).